The following is a 385-amino-acid chain: Alkanesulfonate monooxygenase (385 aa).

This sequence belongs to the SsuD family.

It catalyses the reaction an alkanesulfonate + FMNH2 + O2 = an aldehyde + FMN + sulfite + H2O + 2 H(+). Functionally, catalyzes the desulfonation of aliphatic sulfonates. This Paraburkholderia phymatum (strain DSM 17167 / CIP 108236 / LMG 21445 / STM815) (Burkholderia phymatum) protein is Alkanesulfonate monooxygenase.